The chain runs to 298 residues: Iron-regulated virulence regulatory protein IrgB (298 aa).

The HTH lysR-type domain occupies M1–T59. Residues L19–A38 constitute a DNA-binding region (H-T-H motif).

This sequence belongs to the LysR transcriptional regulatory family.

Its function is as follows. Transcription activation of the irgA gene. In the presence of sufficient iron, transcription of both irgA and irgB is negatively regulated by a fur-like protein. In low iron conditions, negative regulation of transcription is removed, and production of IrgB leads to positive transcriptional activation of irgA. The chain is Iron-regulated virulence regulatory protein IrgB (irgB) from Vibrio cholerae serotype O1 (strain ATCC 39541 / Classical Ogawa 395 / O395).